A 330-amino-acid polypeptide reads, in one-letter code: Phosphate acyltransferase (330 aa).

It belongs to the PlsX family. As to quaternary structure, homodimer. Probably interacts with PlsY.

Its subcellular location is the cytoplasm. It catalyses the reaction a fatty acyl-[ACP] + phosphate = an acyl phosphate + holo-[ACP]. It participates in lipid metabolism; phospholipid metabolism. Catalyzes the reversible formation of acyl-phosphate (acyl-PO(4)) from acyl-[acyl-carrier-protein] (acyl-ACP). This enzyme utilizes acyl-ACP as fatty acyl donor, but not acyl-CoA. The chain is Phosphate acyltransferase from Carboxydothermus hydrogenoformans (strain ATCC BAA-161 / DSM 6008 / Z-2901).